The chain runs to 1868 residues: Protein TIC 214 (1868 aa).

The next 6 helical transmembrane spans lie at 11–31 (LLLL…YYGF), 64–84 (FIMG…HLAL), 87–107 (PHTL…FFWN), 126–146 (LSIQ…HFIL), 166–186 (ILFV…LMKS), and 221–241 (IFSI…PSPI). Positions 248-276 (ESSKGEEKKKTEKERDVEMETISKTKKIE) are enriched in basic and acidic residues. Disordered stretches follow at residues 248 to 277 (ESSK…KIEQ), 617 to 643 (FDFE…GIRS), 658 to 700 (DEDT…QAEE), 782 to 806 (TSDY…KRKE), and 1537 to 1607 (YIDP…RKKK). Acidic residues predominate over residues 617-636 (FDFEEEEEEEEEEDDEEEPT). Residues 674–683 (AKNSDQAKNS) are compositionally biased toward polar residues. 3 stretches are compositionally biased toward basic and acidic residues: residues 684-700 (DQAK…QAEE), 789-806 (GAKE…KRKE), and 1537-1576 (YIDP…ERQH).

The protein belongs to the TIC214 family. As to quaternary structure, part of the Tic complex.

The protein localises to the plastid. Its subcellular location is the chloroplast inner membrane. Its function is as follows. Involved in protein precursor import into chloroplasts. May be part of an intermediate translocation complex acting as a protein-conducting channel at the inner envelope. This Nuphar advena (Common spatterdock) protein is Protein TIC 214.